A 433-amino-acid polypeptide reads, in one-letter code: D-amino acid dehydrogenase (433 aa).

3–17 lines the FAD pocket; sequence VLVLGSGVIGTTSAY.

It belongs to the DadA oxidoreductase family. The cofactor is FAD.

It catalyses the reaction a D-alpha-amino acid + A + H2O = a 2-oxocarboxylate + AH2 + NH4(+). The protein operates within amino-acid degradation; D-alanine degradation; NH(3) and pyruvate from D-alanine: step 1/1. Functionally, oxidative deamination of D-amino acids. The polypeptide is D-amino acid dehydrogenase (Pseudomonas savastanoi pv. phaseolicola (strain 1448A / Race 6) (Pseudomonas syringae pv. phaseolicola (strain 1448A / Race 6))).